Reading from the N-terminus, the 330-residue chain is GTPase Obg (330 aa).

An Obg domain is found at 1 to 159 (MHFIDEVKIY…MWIHLSLKLL (159 aa)). Residues 160–327 (SDVGLVGLPN…IVKLALETIK (168 aa)) form the OBG-type G domain. Residues 166-173 (GLPNAGKS), 191-195 (FTTLV), 212-215 (DIPG), 279-282 (NKCD), and 308-310 (STC) contribute to the GTP site. S173 and T193 together coordinate Mg(2+).

Belongs to the TRAFAC class OBG-HflX-like GTPase superfamily. OBG GTPase family. In terms of assembly, monomer. The cofactor is Mg(2+).

The protein localises to the cytoplasm. In terms of biological role, an essential GTPase which binds GTP, GDP and possibly (p)ppGpp with moderate affinity, with high nucleotide exchange rates and a fairly low GTP hydrolysis rate. Plays a role in control of the cell cycle, stress response, ribosome biogenesis and in those bacteria that undergo differentiation, in morphogenesis control. This chain is GTPase Obg, found in Rickettsia conorii (strain ATCC VR-613 / Malish 7).